The following is a 63-amino-acid chain: SPbeta prophage-derived uncharacterized protein YomP (63 aa).

The polypeptide is SPbeta prophage-derived uncharacterized protein YomP (yomP) (Bacillus subtilis (strain 168)).